Reading from the N-terminus, the 187-residue chain is Phosphatidylethanolamine-binding protein 1 (187 aa).

A Phosphoserine modification is found at serine 13. The residue at position 42 (threonine 42) is a Phosphothreonine. A phosphoserine mark is found at serine 52, serine 98, and serine 153. Residues lysine 93–aspartate 134 form an interaction with RAF1 region.

It belongs to the phosphatidylethanolamine-binding protein family. Has a tendency to form dimers by disulfide cross-linking. Interacts with RAF1 and this interaction is enhanced if RAF1 is phosphorylated on residues 'Ser-338', 'Ser-339', 'Tyr-340' and 'Tyr-341'. Interacts with ALOX15; in response to IL13/interleukin-13, prevents the interaction of PEBP1 with RAF1 to activate the ERK signaling cascade.

Its subcellular location is the cytoplasm. In terms of biological role, binds ATP, opioids and phosphatidylethanolamine. Has lower affinity for phosphatidylinositol and phosphatidylcholine. Serine protease inhibitor which inhibits thrombin, neuropsin and chymotrypsin but not trypsin, tissue type plasminogen activator and elastase. Involved in the positive regulation of epithelial cell migration. Inhibits the kinase activity of RAF1 by inhibiting its activation and by dissociating the RAF1/MEK complex and acting as a competitive inhibitor of MEK phosphorylation. Its function is as follows. HCNP may be involved in the function of the presynaptic cholinergic neurons of the central nervous system. HCNP increases the production of choline acetyltransferase but not acetylcholinesterase. Seems to be mediated by a specific receptor. This is Phosphatidylethanolamine-binding protein 1 (PEBP1) from Canis lupus familiaris (Dog).